The primary structure comprises 329 residues: 4-hydroxythreonine-4-phosphate dehydrogenase (329 aa).

His-136 and Thr-137 together coordinate substrate. Residues His-166, His-211, and His-266 each coordinate a divalent metal cation. 3 residues coordinate substrate: Lys-274, Asn-283, and Arg-292.

This sequence belongs to the PdxA family. In terms of assembly, homodimer. The cofactor is Zn(2+). Mg(2+) is required as a cofactor. It depends on Co(2+) as a cofactor.

It localises to the cytoplasm. It carries out the reaction 4-(phosphooxy)-L-threonine + NAD(+) = 3-amino-2-oxopropyl phosphate + CO2 + NADH. The protein operates within cofactor biosynthesis; pyridoxine 5'-phosphate biosynthesis; pyridoxine 5'-phosphate from D-erythrose 4-phosphate: step 4/5. Its function is as follows. Catalyzes the NAD(P)-dependent oxidation of 4-(phosphooxy)-L-threonine (HTP) into 2-amino-3-oxo-4-(phosphooxy)butyric acid which spontaneously decarboxylates to form 3-amino-2-oxopropyl phosphate (AHAP). This Shigella dysenteriae serotype 1 (strain Sd197) protein is 4-hydroxythreonine-4-phosphate dehydrogenase.